A 716-amino-acid polypeptide reads, in one-letter code: Protein Hook homolog 2 (716 aa).

The tract at residues 1 to 161 (MSVDKAELCG…ELMTKDTPDS (161 aa)) is required for localization to the centrosome and induction of aggresome formation. The segment at 1–546 (MSVDKAELCG…LKRKLEDHLQ (546 aa)) is sufficient for interaction with microtubules. The region spanning 6-122 (AELCGSLLTW…KLLQLVLGCA (117 aa)) is the Calponin-homology (CH) domain. Residue Ser-163 is modified to Phosphoserine. Coiled-coil stretches lie at residues 188–427 (DHLQ…AQLQ) and 455–605 (AELR…VDKA). The segment at 533–716 (DPTLLKRKLE…ALSLRPTDKH (184 aa)) is required for localization to the centrosome and induction of aggresome formation. The tract at residues 582-716 (DSLQKKDADL…ALSLRPTDKH (135 aa)) is sufficient for interaction with CNTRL.

The protein belongs to the hook family. In terms of assembly, self-associates. Component of the FTS/Hook/FHIP complex (FHF complex), composed of AKTIP/FTS, FHIP1B, and one or more members of the Hook family of proteins HOOK1, HOOK2, and HOOK3. May interact directly with AKTIP/FTS, HOOK1 and HOOK3. Associates with several subunits of the homotypic vesicular sorting complex (the HOPS complex) including VPS16 and VPS41; these interactions may be indirect. Interacts with CNTRL. Interacts with microtubules. Interacts with ZC3H14. Interacts with LRGUK (via guanylate kinase-like domain). Interacts with CCDC181. Interacts with AP4M1; the interaction is direct, mediates the interaction between FTS-Hook-FHIP (FHF) complex and AP-4 and the perinuclear distribution of AP-4. As to expression, expressed in brain, cerebellum, kidney, liver and heart, with highest levels in heart and kidney (at protein level).

The protein localises to the cytoplasm. It localises to the cytoskeleton. The protein resides in the microtubule organizing center. It is found in the centrosome. Its subcellular location is the golgi apparatus. The protein localises to the trans-Golgi network. Its function is as follows. Component of the FTS/Hook/FHIP complex (FHF complex). The FHF complex may function to promote vesicle trafficking and/or fusion via the homotypic vesicular protein sorting complex (the HOPS complex). Contributes to the establishment and maintenance of centrosome function. May function in the positioning or formation of aggresomes, which are pericentriolar accumulations of misfolded proteins, proteasomes and chaperones. FHF complex promotes the distribution of AP-4 complex to the perinuclear area of the cell. In Mus musculus (Mouse), this protein is Protein Hook homolog 2 (Hook2).